We begin with the raw amino-acid sequence, 269 residues long: uncharacterized protein (269 aa).

This is an uncharacterized protein from Acanthamoeba polyphaga mimivirus (APMV).